Here is a 597-residue protein sequence, read N- to C-terminus: MDHIRNFSIIAHIDHGKSTLADRIIQVCGGLADREMEAQVLDSMDIERERGITIKAQTAALSYRARDGKVYNLNLIDTPGHVDFSYEVSRSLSACEGALLVVDASQGVEAQTVANCYTAIELGVEVVPVLNKIDLPAANPENAIAEIEDVIGIDASDATRCSAKTGLGVEDVLEALIAKVPPPKGDPAAPLQALIIDSWFDNYVGVVMLVRIVNGTLRPKDKIKLMATGAQYPVEHIGVFTPKSRNLESLSAGQVGFIIAGIKELTAAKVGDTVTHATKAAAEPLPGFKEVKPQVFAGLYPVEANQYDALRESLEKLKLNDASLQYEPEVSQALGFGFRCGFLGLLHMEIVQERLEREFDMDLITTAPTVVYEVVQSDGSTIMVENPAKMPEPARIAEIREPIVTVNLYMPQDYVGSVITLCEQKRGSQINMQYHGRQVQLTYEIPMAEIVLDFFDRLKSVSRGYASMDYEFKEYRSSDVVKVDMLINGDKVDALSIIVHRSQSQYRGREVAAKMREIIPRQMYDVAIQAAIGAHIIARENIKALRKNVLAKCYGGDITRKKKLLEKQKEGKKRMKQVGSVEIPQEAFLAILRVEDK.

Positions 2–184 constitute a tr-type G domain; it reads DHIRNFSIIA…ALIAKVPPPK (183 aa). GTP contacts are provided by residues 14 to 19 and 131 to 134; these read DHGKST and NKID.

Belongs to the TRAFAC class translation factor GTPase superfamily. Classic translation factor GTPase family. LepA subfamily.

Its subcellular location is the cell inner membrane. The catalysed reaction is GTP + H2O = GDP + phosphate + H(+). Functionally, required for accurate and efficient protein synthesis under certain stress conditions. May act as a fidelity factor of the translation reaction, by catalyzing a one-codon backward translocation of tRNAs on improperly translocated ribosomes. Back-translocation proceeds from a post-translocation (POST) complex to a pre-translocation (PRE) complex, thus giving elongation factor G a second chance to translocate the tRNAs correctly. Binds to ribosomes in a GTP-dependent manner. The protein is Elongation factor 4 of Burkholderia multivorans (strain ATCC 17616 / 249).